Consider the following 320-residue polypeptide: ATP-dependent 6-phosphofructokinase (320 aa).

ATP-binding positions include glycine 11, 72 to 73 (RY), and 102 to 105 (GDGS). Mg(2+) is bound at residue aspartate 103. Substrate is bound by residues 125-127 (TID), arginine 162, 169-171 (MGR), glutamate 222, arginine 243, and 249-252 (HMQR). Residue aspartate 127 is the Proton acceptor of the active site.

Belongs to the phosphofructokinase type A (PFKA) family. ATP-dependent PFK group I subfamily. Prokaryotic clade 'B1' sub-subfamily. Homotetramer. Mg(2+) is required as a cofactor.

It localises to the cytoplasm. It catalyses the reaction beta-D-fructose 6-phosphate + ATP = beta-D-fructose 1,6-bisphosphate + ADP + H(+). It participates in carbohydrate degradation; glycolysis; D-glyceraldehyde 3-phosphate and glycerone phosphate from D-glucose: step 3/4. Allosterically activated by ADP and other diphosphonucleosides, and allosterically inhibited by phosphoenolpyruvate. Functionally, catalyzes the phosphorylation of D-fructose 6-phosphate to fructose 1,6-bisphosphate by ATP, the first committing step of glycolysis. The protein is ATP-dependent 6-phosphofructokinase of Lactiplantibacillus plantarum (strain ATCC BAA-793 / NCIMB 8826 / WCFS1) (Lactobacillus plantarum).